We begin with the raw amino-acid sequence, 266 residues long: MWYSTVSNPRIALIKQGYHILAEYNLVKEELKNIYAIPSYACALHWFGVIFVHSGIYAGSVFRFSILLPDNFPEDASLLTVVFSTVILHPHICPQNRTLDLGHFLKEWRKDQHHIWHVLRYIQAIFADPEGSICTGQAASGDLVVMDEVSNMEALNMLAKSRPEYIKRVQEQAIASRNHIYDRPLTDDPHYIIVEPYCAERHLKFVDQLKSPCWKEATSMDCSQPSEYLGHIDSSRQLDEEEANQLEKLHRTRIVESHRDEAVDSV.

The region spanning 15–178 is the UBC core domain; sequence KQGYHILAEY…VQEQAIASRN (164 aa).

This sequence belongs to the ubiquitin-conjugating enzyme family. FTS subfamily.

This is Protein crossbronx-like from Drosophila yakuba (Fruit fly).